The sequence spans 350 residues: Ion-translocating oxidoreductase complex subunit D (350 aa).

Transmembrane regions (helical) follow at residues 15–35 (QTQT…LAQT), 36–56 (WFFG…ALGA), 67–87 (PIKP…IGLS), 88–108 (LPPL…IIIA), and 122–142 (PAMV…TSWL). T186 carries the FMN phosphoryl threonine modification. Transmembrane regions (helical) follow at residues 213–233 (WGGI…LFLL), 242–262 (IPGA…LMTP), 264–284 (ATAT…AFFI), and 299–316 (LVYG…RRFG).

Belongs to the NqrB/RnfD family. In terms of assembly, the complex is composed of six subunits: RnfA, RnfB, RnfC, RnfD, RnfE and RnfG. FMN is required as a cofactor.

The protein localises to the cell inner membrane. In terms of biological role, part of a membrane-bound complex that couples electron transfer with translocation of ions across the membrane. This Aeromonas salmonicida (strain A449) protein is Ion-translocating oxidoreductase complex subunit D.